Consider the following 2472-residue polypeptide: Spectrin alpha chain, non-erythrocytic 1 (2472 aa).

Residue M1 is modified to N-acetylmethionine. 9 Spectrin repeats span residues 45 to 146 (RFQF…IKLL), 150 to 251 (KLVQ…QGKL), 256 to 358 (EVQR…ARLD), 361 to 465 (YRLQ…QYEQ), 468 to 570 (DLQL…AQLA), 574 to 676 (HLQQ…KLRE), 679 to 781 (QQQQ…QKLA), 785 to 888 (RLQQ…DLED), and 891 to 961 (QAQQ…QQVA). S587 is subject to Phosphoserine. K637 is modified (N6-acetyllysine). Residue K803 is modified to N6-acetyllysine. S924, S982, S999, S1029, S1031, and S1041 each carry phosphoserine. Positions 967-1026 (TGKELVLALYDYQEKSPREVTMKKGDILTLLNSTNKDWWKVEVNDRQGFVPAAYVKKLDP) constitute an SH3 domain. The Spectrin 10 repeat unit spans residues 1096–1166 (LFREANELQQ…LESEGLMAEE (71 aa)). Position 1176 is a phosphotyrosine (Y1176). S1190, S1207, S1217, S1291, S1306, S1323, and S1338 each carry phosphoserine. Residues 1233–1336 (HEVQRFHRDA…RADQRKAKLG (104 aa)) form a Spectrin 11 repeat. Spectrin repeat units lie at residues 1339 to 1441 (HDLQ…RMML) and 1446 to 1549 (ELQL…KLGE). K1519 bears the N6-acetyllysine mark. A phosphoserine mark is found at S1550, S1557, S1578, S1615, and S1647. 7 Spectrin repeats span residues 1552-1656 (TLQQ…KLKE), 1659-1762 (KQQN…KLSE), 1764-1868 (HRLH…RLEE), 1871-1974 (EYQQ…KLDE), 1978-2081 (FLQF…KLLE), 2092-2194 (LFLT…LELQ), and 2206-2310 (LRQE…NLEQ). The residue at position 2020 (T2020) is a Phosphothreonine. An N6-acetyllysine modification is found at K2052. A Phosphothreonine modification is found at T2066. 3 consecutive EF-hand domains span residues 2323–2358 (EALK…LGYD), 2366–2401 (EPDP…RETE), and 2404–2439 (KSSE…EQAD). Positions 2336, 2338, 2340, 2342, 2347, 2379, 2381, 2383, 2385, and 2390 each coordinate Ca(2+). K2421 carries the post-translational modification N6-acetyllysine.

This sequence belongs to the spectrin family. As to quaternary structure, like erythrocyte spectrin, the spectrin-like proteins are capable of forming dimers which can further associate to tetramers. Interacts (via C-terminal spectrin repeats) with TRPC4. Interacts with CALM and EMD. Interacts with isoform 1 of ACP1. Identified in a complex with ACTN4, CASK, IQGAP1, MAGI2, NPHS1 and SPTBN1. Interacts with SHANK3 (via ANK repeats). Interacts with CLN3; this interaction regulates the fodrin localization at the plasma membrane. In terms of processing, phosphorylation of Tyr-1176 decreases sensitivity to cleavage by calpain in vitro.

It is found in the cytoplasm. The protein localises to the cytoskeleton. It localises to the cell cortex. In terms of biological role, fodrin, which seems to be involved in secretion, interacts with calmodulin in a calcium-dependent manner and is thus candidate for the calcium-dependent movement of the cytoskeleton at the membrane. This is Spectrin alpha chain, non-erythrocytic 1 (Sptan1) from Mus musculus (Mouse).